Consider the following 420-residue polypeptide: 3-isopropylmalate dehydratase large subunit (420 aa).

[4Fe-4S] cluster-binding residues include Cys-300, Cys-360, and Cys-363.

The protein belongs to the aconitase/IPM isomerase family. LeuC type 2 subfamily. Heterodimer of LeuC and LeuD. [4Fe-4S] cluster serves as cofactor.

The enzyme catalyses (2R,3S)-3-isopropylmalate = (2S)-2-isopropylmalate. The protein operates within amino-acid biosynthesis; L-leucine biosynthesis; L-leucine from 3-methyl-2-oxobutanoate: step 2/4. Catalyzes the isomerization between 2-isopropylmalate and 3-isopropylmalate, via the formation of 2-isopropylmaleate. In Clostridium kluyveri (strain ATCC 8527 / DSM 555 / NBRC 12016 / NCIMB 10680 / K1), this protein is 3-isopropylmalate dehydratase large subunit.